Here is a 109-residue protein sequence, read N- to C-terminus: EEVSNGQEHTEGMXQGEXNXIXVEEHHEGEKNSHLVGKDEEKKLFVGALSEHFSKYGEIEGINIKVDPVTGRAGEHVINSKAYFGQFGNIVEVELFDKTKARGTRGGQR.

Residues 1–36 are disordered; it reads EEVSNGQEHTEGMXQGEXNXIXVEEHHEGEKNSHLV. Residues 23-36 show a composition bias toward basic and acidic residues; the sequence is VEEHHEGEKNSHLV. An RRM domain is found at 40–50; the sequence is EEKKLFVGALS. Asymmetric dimethylarginine occurs at positions 102 and 105.

It localises to the cytoplasm. The protein localises to the nucleus. The sequence is that of Heterogeneous nuclear ribonucleoprotein-like protein HD40 from Artemia salina (Brine shrimp).